A 216-amino-acid polypeptide reads, in one-letter code: MEPAFWHKRWADNQIGFHQLQVNPYLQAHWPALGLAPGARVLVPLCGKSLDMLWLAAQGYRVLGVELSRRAVEDFFTEHGLPAQVTQHGAFEAWRSDEVEIWCGDVFALRAEDLADCAGVYDRAALIALPPEMRERYMALLGAKLPTACRGVLVTLDYDQALIDGPPFSVPDAEVRAGFSGWQVDEVEGLEILEDSPKFIKAGVSSLVERAYRLTR.

Tryptophan 10, leucine 45, glutamate 66, and arginine 123 together coordinate S-adenosyl-L-methionine.

Belongs to the class I-like SAM-binding methyltransferase superfamily. TPMT family.

It localises to the cytoplasm. It catalyses the reaction S-adenosyl-L-methionine + a thiopurine = S-adenosyl-L-homocysteine + a thiopurine S-methylether.. This chain is Thiopurine S-methyltransferase, found in Pseudomonas entomophila (strain L48).